A 79-amino-acid polypeptide reads, in one-letter code: Small ribosomal subunit protein bS18c (79 aa).

It belongs to the bacterial ribosomal protein bS18 family. Part of the 30S ribosomal subunit.

Its subcellular location is the plastid. The protein resides in the chloroplast. This Physcomitrium patens (Spreading-leaved earth moss) protein is Small ribosomal subunit protein bS18c.